Here is a 485-residue protein sequence, read N- to C-terminus: Calcium/manganese antiporter SLC30A10 (485 aa).

The Cytoplasmic segment spans residues 1–10; that stretch reads MGRYSGKTCR. The chain crosses the membrane as a helical span at residues 11–31; that stretch reads LLFMLVLTVAFFVAELVSGYL. Residues 32–40 lie on the Extracellular side of the membrane; sequence GNSIALLSD. A helical transmembrane segment spans residues 41–61; that stretch reads SFNMLSDLISLCVGLSAGYIA. Residues 62-81 are Cytoplasmic-facing; it reads RRPTRGFSATYGYARAEVVG. The chain crosses the membrane as a helical span at residues 82–102; it reads ALSNAVFLTALCFTIFVEAVL. Over 103-113 the chain is Extracellular; it reads RLARPERIDDP. Residues 114–134 traverse the membrane as a helical segment; that stretch reads ELVLIVGVLGLLVNVVGLLIF. The Cytoplasmic portion of the chain corresponds to 135–244; it reads QDCAAWFACC…ALNIRGVLLH (110 aa). The disordered stretch occupies residues 167-196; that stretch reads FGGPQGAEDPRRAADPTAPGSDSAVTLRGT. The helical transmembrane segment at 245–265 threads the bilayer; sequence VMGDALGSVVVVITAIIFYVL. Over 266-278 the chain is Extracellular; the sequence is PLKSEDPCNWQCY. Residues 279–299 traverse the membrane as a helical segment; the sequence is IDPSLTVLMVIIILSSAFPLI. Residues 300–485 are Cytoplasmic-facing; the sequence is KETAAILLQM…DQCYVNRTHF (186 aa). The required for plasma membrane localization stretch occupies residues 308 to 485; sequence QMVPKGVNME…DQCYVNRTHF (178 aa).

This sequence belongs to the cation diffusion facilitator (CDF) transporter (TC 2.A.4) family. SLC30A subfamily. Forms homodimers. Forms heterodimers and high-molecular weight oligomers with SLC30A3, SLC30A2 and SLC30A4; heterodimerization is mediated by covalent-bound tyrosine residues, occurs probably in a tissue-specific manner and could mediate the intracellular zinc transport activity into early endosomes and recycling endosomes. As to expression, specifically expressed in fetal liver and fetal brain. Expressed in adult tissues with relative levels small intestine &gt; liver &gt; testes &gt; brain &gt; ovary &gt; colon &gt; cervix &gt; prostate &gt; placenta. Expressed in liver and neurons of the nervous system (at protein level).

It localises to the cell membrane. The protein localises to the golgi apparatus membrane. Its subcellular location is the recycling endosome membrane. The protein resides in the early endosome membrane. The catalysed reaction is Mn(2+)(out) + Ca(2+)(in) = Mn(2+)(in) + Ca(2+)(out). It carries out the reaction Zn(2+)(in) = Zn(2+)(out). Its function is as follows. Calcium:manganese antiporter of the plasma membrane mediating the efflux of intracellular manganese coupled to an active extracellular calcium exchange. Required for intracellular manganese homeostasis, an essential cation for the function of several enzymes, including some crucially important for the metabolism of neurotransmitters and other neuronal metabolic pathways. Manganese can also be cytotoxic and induce oxidative stress, mitochondrial dysfunction and apoptosis. Could also have an intracellular zinc ion transporter activity, directly regulating intracellular zinc ion homeostasis and more indirectly various signaling pathway and biological processes. This chain is Calcium/manganese antiporter SLC30A10, found in Homo sapiens (Human).